We begin with the raw amino-acid sequence, 520 residues long: Intermediate filament protein ON3 (520 aa).

The span at 1-27 shows a compositional bias: low complexity; it reads MSYTKKTSYSVKSSSSGSVPRSFSSMS. The tract at residues 1–33 is disordered; it reads MSYTKKTSYSVKSSSSGSVPRSFSSMSYSGPSV. The head stretch occupies residues 1 to 108; the sequence is MSYTKKTSYS…DPNIQVVRTQ (108 aa). Residues 109–144 are coil 1A; the sequence is EKEQMKSLNNRFASFIDKVRFLEQQNKMLETKWSLL. The IF rod domain maps to 109–420; sequence EKEQMKSLNN…KLLEGEEDRL (312 aa). Positions 145 to 157 are linker 1; that stretch reads QNQTATRSNIDAM. A coil 1B region spans residues 158–253; sequence FEAYINNLRR…QIFEEEIREL (96 aa). A linker 12 region spans residues 254–273; it reads QSQIKDTSVVVEMDNSRNLD. The coil 2 stretch occupies residues 274 to 420; it reads MDAIVAEVRA…KLLEGEEDRL (147 aa). Residues 421–520 are tail; that stretch reads LSGIKSVNIS…VSESSEVVQD (100 aa).

It belongs to the intermediate filament family.

Functionally, one of the non-neuronal predominant intermediate filament proteins of the visual pathway. This is Intermediate filament protein ON3 from Carassius auratus (Goldfish).